The following is a 726-amino-acid chain: Ribonuclease R (726 aa).

Positions 264–592 (RKDLTELAFV…TVHRLLWMNL (329 aa)) constitute an RNB domain. One can recognise an S1 motif domain in the interval 645–726 (GQTFHGFISA…VQKRAILTLV (82 aa)).

This sequence belongs to the RNR ribonuclease family. RNase R subfamily.

Its subcellular location is the cytoplasm. The catalysed reaction is Exonucleolytic cleavage in the 3'- to 5'-direction to yield nucleoside 5'-phosphates.. In terms of biological role, 3'-5' exoribonuclease that releases 5'-nucleoside monophosphates and is involved in maturation of structured RNAs. The sequence is that of Ribonuclease R from Mycoplasma pneumoniae (strain ATCC 29342 / M129 / Subtype 1) (Mycoplasmoides pneumoniae).